We begin with the raw amino-acid sequence, 531 residues long: Apolipoprotein N-acyltransferase (531 aa).

Helical transmembrane passes span Ile-8–Val-28, Phe-34–Val-54, Pro-69–Gly-89, Leu-105–Ala-125, Ile-136–Gly-156, Val-178–Ile-198, and Gly-207–Ala-227. Residues Val-243–Gly-493 form the CN hydrolase domain. Glu-287 acts as the Proton acceptor in catalysis. Residue Lys-351 is part of the active site. The Nucleophile role is filled by Cys-405. Residues Ile-507 to Asn-527 traverse the membrane as a helical segment.

Belongs to the CN hydrolase family. Apolipoprotein N-acyltransferase subfamily.

Its subcellular location is the cell inner membrane. It carries out the reaction N-terminal S-1,2-diacyl-sn-glyceryl-L-cysteinyl-[lipoprotein] + a glycerophospholipid = N-acyl-S-1,2-diacyl-sn-glyceryl-L-cysteinyl-[lipoprotein] + a 2-acyl-sn-glycero-3-phospholipid + H(+). The protein operates within protein modification; lipoprotein biosynthesis (N-acyl transfer). In terms of biological role, catalyzes the phospholipid dependent N-acylation of the N-terminal cysteine of apolipoprotein, the last step in lipoprotein maturation. The polypeptide is Apolipoprotein N-acyltransferase (Sinorhizobium medicae (strain WSM419) (Ensifer medicae)).